A 315-amino-acid chain; its full sequence is Salivary protein SG34 (315 aa).

The signal sequence occupies residues Met1–Ser20. Residues Asn98 to Gln161 are a coiled coil.

Its function is as follows. (Microbial infection) Modulates replication of duck Tembusu virus in salivary glands and virus release into the saliva, probably via the regulation of antimicrobial peptides expression in response to duck Tembusu virus infection. The chain is Salivary protein SG34 from Aedes albopictus (Asian tiger mosquito).